The following is a 562-amino-acid chain: Potassium-transporting ATPase potassium-binding subunit (562 aa).

The next 12 membrane-spanning stretches (helical) occupy residues 6-26, 62-82, 132-152, 170-190, 253-273, 283-303, 327-347, 356-376, 379-399, 416-436, 483-503, and 526-546; these read FLLI…LGSF, YALA…ALLM, GLAV…FALI, VFRI…LFFV, FVQM…FGQV, LIWA…YAEL, FGIL…CGAV, ALGG…FGGV, GLYG…LMIG, MTAL…ALAI, LLLA…VLAI, and LFIG…FVPA.

This sequence belongs to the KdpA family. In terms of assembly, the system is composed of three essential subunits: KdpA, KdpB and KdpC.

The protein localises to the cell inner membrane. In terms of biological role, part of the high-affinity ATP-driven potassium transport (or Kdp) system, which catalyzes the hydrolysis of ATP coupled with the electrogenic transport of potassium into the cytoplasm. This subunit binds the periplasmic potassium ions and delivers the ions to the membrane domain of KdpB through an intramembrane tunnel. This Serratia proteamaculans (strain 568) protein is Potassium-transporting ATPase potassium-binding subunit.